A 381-amino-acid polypeptide reads, in one-letter code: Peptidoglycan transport system permease protein YejE (381 aa).

5 helical membrane passes run 38–58 (YWSF…EFIA), 183–203 (VLFG…AGAI), 230–250 (ILLI…GIML), 292–312 (LLPN…SGSI), and 347–367 (WLGL…IFVG). The 193-residue stretch at 179 to 371 (FRISVLFGLT…LLIFVGEAVR (193 aa)) folds into the ABC transmembrane type-1 domain.

Belongs to the binding-protein-dependent transport system permease family. As to quaternary structure, the complex is composed of one ATP-binding protein (YejF), two transmembrane proteins (YejB and YejE) and a solute-binding protein (YepA or YejA).

The protein localises to the cell inner membrane. Functionally, part of the ABC transporter complex YejBEF-YepA involved in the uptake of muropeptides, the breakdown products of cell wall peptidoglycan. The import of muropeptides into the cell enables peptidoglycan recycling, which is vital for cell wall integrity in this bacterium. Is also probably part of the ABC transporter complex YejABEF, which is likely involved in broad-spectrum peptide import. Responsible for the translocation of the substrate across the membrane. This is Peptidoglycan transport system permease protein YejE from Agrobacterium fabrum (strain C58 / ATCC 33970) (Agrobacterium tumefaciens (strain C58)).